The sequence spans 633 residues: Micronuclear linker histone polyprotein (633 aa).

2 DNA-binding regions (HMG box) span residues 12 to 74 and 96 to 164; these read PPKK…LFHY and PKKP…KKWN. Residues 170–633 form a disordered region; that stretch reads AAQKKQTKRK…AYGKKANKKQ (464 aa). Over residues 174 to 190 the composition is skewed to basic residues; the sequence is KQTKRKNSTSKSRRSSS. 2 stretches are compositionally biased toward low complexity: residues 212–224 and 253–271; these read SSASQGRSQSSSS and NSTSNKRNSSSSSKRSSSS. 2 stretches are compositionally biased toward basic residues: residues 272–309 and 330–352; these read KNKKSSSSKNKKSSSSKGRKSSSSRGRKASSSKNRKSS and SNKRKASSSRGRKSSSSKGRKSS. 2 stretches are compositionally biased toward basic and acidic residues: residues 353 to 374 and 382 to 401; these read KSQERKNSHADTSKQMEDEGQK and AKRDESSKKSRRNSMKEART. Residues 406–416 are compositionally biased toward low complexity; that stretch reads NKSASKASKSG. Residues 417 to 444 show a composition bias toward basic residues; it reads SKSKGKSASKSKGKSSSKGKNSKSRSAS. Residues 446–469 are compositionally biased toward polar residues; it reads PKSNAAQNSNNTHQTADSSENASS. Residues 478–491 show a composition bias toward basic and acidic residues; that stretch reads RQREQKDMVNEKSN. Positions 496-524 are enriched in basic residues; the sequence is SKGKKNSKSNTRSKSKSKSASKSRKNASK. Basic and acidic residues-rich tracts occupy residues 540 to 550 and 559 to 612; these read SRSESKSKSEA and EVIE…EDSK.

In terms of processing, all four histones are processed from the precursor molecule. Phosphorylated in growing and dividing cells but not in nongrowing (starved) cells. Post-translationally, the N-terminus of MIC LH-alpha and MIC LH-delta is blocked.

The protein resides in the nucleus. It localises to the chromosome. This chain is Micronuclear linker histone polyprotein (MLH), found in Tetrahymena thermophila (strain SB210).